The primary structure comprises 274 residues: MQQSLLTFEQVYYTYPGTQQSVLNGITLQIPQGKRCALIGRNGCGKTTLFSLANGLYKPQQGRVYWQEKALQYDRKNLMQLRQKVGLVFQNPEQQLVASTVEEDISYGLCNLGLPIADIQQRVTQALVEFELTELAERPVHHLSLGQKKRVSLADVMVLRPELLLLDEPTAYLDRPQSRNLMAMLNKIYKSGTTILMASHDLDLVYCWSDWVFVMDAGRLILEGKPEDIFSQREILDSIELGLPPIYEIFITEELATKEHNSENFRRRILQFFC.

An ABC transporter domain is found at 6 to 242 (LTFEQVYYTY…REILDSIELG (237 aa)). 40–47 (GRNGCGKT) contributes to the ATP binding site.

Belongs to the ABC transporter superfamily.

The protein localises to the cell inner membrane. Its function is as follows. Probably part of an ABC transporter complex. Responsible for energy coupling to the transport system. The sequence is that of Putative ABC transporter ATP-binding protein alr3946 from Nostoc sp. (strain PCC 7120 / SAG 25.82 / UTEX 2576).